Consider the following 521-residue polypeptide: Medium/long-chain-fatty-acid--[acyl-carrier-protein] ligase MbtM (521 aa).

Belongs to the ATP-dependent AMP-binding enzyme family.

It catalyses the reaction a long-chain fatty acid + holo-[ACP] + ATP = a long-chain fatty acyl-[ACP] + AMP + diphosphate. It carries out the reaction a medium-chain fatty acid + holo-[ACP] + ATP = a medium-chain fatty acyl-[ACP] + AMP + diphosphate. The protein operates within siderophore biosynthesis; mycobactin biosynthesis. Functionally, activates lipidic moieties required for mycobactin biosynthesis. Converts medium- to long-chain aliphatic fatty acids into acyl adenylate, which is further transferred on to the phosphopantetheine arm of the carrier protein MbtL. This is Medium/long-chain-fatty-acid--[acyl-carrier-protein] ligase MbtM (mbtM) from Mycobacterium sp. (strain MCS).